We begin with the raw amino-acid sequence, 235 residues long: Protein shisa-5 (235 aa).

Positions 1 to 26 (MAAPAPSLWTLLLLLLLLPPPPGAHG) are cleaved as a signal peptide. At 27–105 (ELCRPFGEDN…SSFDSDPMSG (79 aa)) the chain is on the extracellular side. The helical transmembrane segment at 106 to 126 (FGATVAIGVTIFVVFIATIII) threads the bilayer. Residues 127–235 (CFTCSCCCLY…TYMDSLKTIP (109 aa)) are Cytoplasmic-facing. The tract at residues 157 to 235 (APYPQPQPQP…TYMDSLKTIP (79 aa)) is disordered. 2 stretches are compositionally biased toward pro residues: residues 159–172 (YPQPQPQPVAPSYP) and 181–211 (PMPPQPGMPAAPYPTQYPPPYLAQPTGPPPY).

Belongs to the shisa family. Interacts with PDCD6; PDCD6 can stabilize SHISA5. In terms of tissue distribution, spleen and thymus.

It localises to the endoplasmic reticulum membrane. Its subcellular location is the nucleus membrane. Can induce apoptosis in a caspase-dependent manner and plays a role in p53/TP53-dependent apoptosis. In Mus musculus (Mouse), this protein is Protein shisa-5 (Shisa5).